Consider the following 62-residue polypeptide: MESVAKPATTKEGSAKQAAIVVGVLALGWFAIQVAFIPLFNKVRGGGSDKKDDDVNAFTPDT.

The Chloroplast intermembrane segment spans residues 1 to 17 (MESVAKPATTKEGSAKQ). The helical transmembrane segment at 18-40 (AAIVVGVLALGWFAIQVAFIPLF) threads the bilayer. Topologically, residues 41-62 (NKVRGGGSDKKDDDVNAFTPDT) are cytoplasmic.

It localises to the plastid. The protein resides in the chloroplast outer membrane. The sequence is that of 6.7 kDa chloroplast outer envelope membrane protein from Spinacia oleracea (Spinach).